The sequence spans 916 residues: Translation initiation factor IF-2 (916 aa).

Positions 151–191 are enriched in basic and acidic residues; it reads NLDEQQRLAESDRARDEAIQRKRDEEQAAKDRVEAERKAAE. Disordered regions lie at residues 151–262 and 280–328; these read NLDE…SHVM and HLSA…ERPT. 2 stretches are compositionally biased toward low complexity: residues 192 to 243 and 293 to 305; these read EAAA…ATPA and RGKP…SSSS. Residues 415–584 form the tr-type G domain; that stretch reads SRPPVVTIMG…SLQAEVLELK (170 aa). Residues 424-431 are G1; it reads GHVDHGKT. Residue 424 to 431 coordinates GTP; sequence GHVDHGKT. The interval 449–453 is G2; it reads GITQH. The tract at residues 470–473 is G3; it reads DTPG. GTP is bound by residues 470-474 and 524-527; these read DTPGH and NKID. Residues 524-527 form a G4 region; that stretch reads NKID. The tract at residues 560–562 is G5; sequence SAK.

It belongs to the TRAFAC class translation factor GTPase superfamily. Classic translation factor GTPase family. IF-2 subfamily.

The protein localises to the cytoplasm. One of the essential components for the initiation of protein synthesis. Protects formylmethionyl-tRNA from spontaneous hydrolysis and promotes its binding to the 30S ribosomal subunits. Also involved in the hydrolysis of GTP during the formation of the 70S ribosomal complex. The sequence is that of Translation initiation factor IF-2 from Xanthomonas campestris pv. campestris (strain B100).